The primary structure comprises 224 residues: Mammalian ependymin-related protein 1 (224 aa).

The N-terminal stretch at 1–37 (MPGRAPLHTVPGALGPWLLGCLWAWTLCGLCSLGAVG) is a signal peptide. 3 disulfides stabilise this stretch: cysteine 42/cysteine 172, cysteine 88/cysteine 222, and cysteine 113/cysteine 210. Asparagine 130 and asparagine 182 each carry an N-linked (GlcNAc...) asparagine glycan.

It belongs to the ependymin family. Homodimer. N-glycosylated; the glycan contains mannose-6-phosphate moieties.

The protein localises to the lysosome lumen. The protein resides in the secreted. In terms of biological role, binds anionic lipids and gangliosides at acidic pH. The protein is Mammalian ependymin-related protein 1 (EPDR1) of Macaca fascicularis (Crab-eating macaque).